The sequence spans 254 residues: Aspartate/glutamate leucyltransferase (254 aa).

The protein belongs to the R-transferase family. Bpt subfamily.

The protein localises to the cytoplasm. The enzyme catalyses N-terminal L-glutamyl-[protein] + L-leucyl-tRNA(Leu) = N-terminal L-leucyl-L-glutamyl-[protein] + tRNA(Leu) + H(+). It carries out the reaction N-terminal L-aspartyl-[protein] + L-leucyl-tRNA(Leu) = N-terminal L-leucyl-L-aspartyl-[protein] + tRNA(Leu) + H(+). In terms of biological role, functions in the N-end rule pathway of protein degradation where it conjugates Leu from its aminoacyl-tRNA to the N-termini of proteins containing an N-terminal aspartate or glutamate. The sequence is that of Aspartate/glutamate leucyltransferase from Maricaulis maris (strain MCS10) (Caulobacter maris).